The primary structure comprises 98 residues: DNA-binding protein Fis (98 aa).

Residues 74 to 93 constitute a DNA-binding region (H-T-H motif); that stretch reads QTRAALMMGINRGTLRKKLK.

Belongs to the transcriptional regulatory Fis family. As to quaternary structure, homodimer.

In terms of biological role, activates ribosomal RNA transcription. Plays a direct role in upstream activation of rRNA promoters. This Yersinia enterocolitica serotype O:8 / biotype 1B (strain NCTC 13174 / 8081) protein is DNA-binding protein Fis.